A 354-amino-acid polypeptide reads, in one-letter code: S-adenosylmethionine:tRNA ribosyltransferase-isomerase (354 aa).

It belongs to the QueA family. Monomer.

It is found in the cytoplasm. The catalysed reaction is 7-aminomethyl-7-carbaguanosine(34) in tRNA + S-adenosyl-L-methionine = epoxyqueuosine(34) in tRNA + adenine + L-methionine + 2 H(+). It functions in the pathway tRNA modification; tRNA-queuosine biosynthesis. Transfers and isomerizes the ribose moiety from AdoMet to the 7-aminomethyl group of 7-deazaguanine (preQ1-tRNA) to give epoxyqueuosine (oQ-tRNA). The protein is S-adenosylmethionine:tRNA ribosyltransferase-isomerase of Pseudomonas savastanoi pv. phaseolicola (strain 1448A / Race 6) (Pseudomonas syringae pv. phaseolicola (strain 1448A / Race 6)).